Consider the following 137-residue polypeptide: Transcription antitermination protein NusB (137 aa).

Belongs to the NusB family.

In terms of biological role, involved in transcription antitermination. Required for transcription of ribosomal RNA (rRNA) genes. Binds specifically to the boxA antiterminator sequence of the ribosomal RNA (rrn) operons. This is Transcription antitermination protein NusB from Actinobacillus pleuropneumoniae serotype 5b (strain L20).